The following is a 316-amino-acid chain: 4-hydroxy-3-methylbut-2-enyl diphosphate reductase (316 aa).

C12 provides a ligand contact to [4Fe-4S] cluster. Residues H41 and H74 each contribute to the (2E)-4-hydroxy-3-methylbut-2-enyl diphosphate site. 2 residues coordinate dimethylallyl diphosphate: H41 and H74. 2 residues coordinate isopentenyl diphosphate: H41 and H74. C96 serves as a coordination point for [4Fe-4S] cluster. Position 124 (H124) interacts with (2E)-4-hydroxy-3-methylbut-2-enyl diphosphate. Residue H124 coordinates dimethylallyl diphosphate. H124 serves as a coordination point for isopentenyl diphosphate. The active-site Proton donor is the E126. T169 provides a ligand contact to (2E)-4-hydroxy-3-methylbut-2-enyl diphosphate. A [4Fe-4S] cluster-binding site is contributed by C199. (2E)-4-hydroxy-3-methylbut-2-enyl diphosphate is bound by residues S227, S228, N229, and S271. S227, S228, N229, and S271 together coordinate dimethylallyl diphosphate. Isopentenyl diphosphate is bound by residues S227, S228, N229, and S271.

The protein belongs to the IspH family. [4Fe-4S] cluster serves as cofactor.

It carries out the reaction isopentenyl diphosphate + 2 oxidized [2Fe-2S]-[ferredoxin] + H2O = (2E)-4-hydroxy-3-methylbut-2-enyl diphosphate + 2 reduced [2Fe-2S]-[ferredoxin] + 2 H(+). The enzyme catalyses dimethylallyl diphosphate + 2 oxidized [2Fe-2S]-[ferredoxin] + H2O = (2E)-4-hydroxy-3-methylbut-2-enyl diphosphate + 2 reduced [2Fe-2S]-[ferredoxin] + 2 H(+). Its pathway is isoprenoid biosynthesis; dimethylallyl diphosphate biosynthesis; dimethylallyl diphosphate from (2E)-4-hydroxy-3-methylbutenyl diphosphate: step 1/1. The protein operates within isoprenoid biosynthesis; isopentenyl diphosphate biosynthesis via DXP pathway; isopentenyl diphosphate from 1-deoxy-D-xylulose 5-phosphate: step 6/6. Functionally, catalyzes the conversion of 1-hydroxy-2-methyl-2-(E)-butenyl 4-diphosphate (HMBPP) into a mixture of isopentenyl diphosphate (IPP) and dimethylallyl diphosphate (DMAPP). Acts in the terminal step of the DOXP/MEP pathway for isoprenoid precursor biosynthesis. This is 4-hydroxy-3-methylbut-2-enyl diphosphate reductase from Xanthomonas oryzae pv. oryzae (strain MAFF 311018).